Here is a 283-residue protein sequence, read N- to C-terminus: Protease HtpX (283 aa).

2 helical membrane passes run 4–24 (ILLF…ILSV) and 33–53 (GGIL…SLFL). Zn(2+) is bound at residue H139. The active site involves E140. H143 is a binding site for Zn(2+). 2 consecutive transmembrane segments (helical) span residues 147 to 167 (GDMV…IFLS) and 190 to 210 (IYFL…SIIA). E218 is a Zn(2+) binding site.

It belongs to the peptidase M48B family. It depends on Zn(2+) as a cofactor.

It localises to the cell inner membrane. The sequence is that of Protease HtpX from Haemophilus influenzae (strain PittEE).